The following is a 72-amino-acid chain: Heat-stable enterotoxin ST-IA/ST-P (72 aa).

A signal peptide spans 1 to 19 (MKKLMLAIFISVLSFPSFS). Positions 20-54 (QSTESLDSSKEKITLETKKCDVVKNNSEKKSENMN) are excised as a propeptide. 3 disulfide bridges follow: Cys59–Cys64, Cys60–Cys68, and Cys63–Cys71.

Belongs to the heat-stable enterotoxin family.

Its subcellular location is the secreted. Its function is as follows. Toxin which activates the particulate form of guanylate cyclase and increases cyclic GMP levels within the host intestinal epithelial cells. The sequence is that of Heat-stable enterotoxin ST-IA/ST-P (sta1) from Escherichia coli.